Here is a 236-residue protein sequence, read N- to C-terminus: Small ribosomal subunit protein uS2c (236 aa).

It belongs to the universal ribosomal protein uS2 family.

It localises to the plastid. Its subcellular location is the chloroplast. The protein is Small ribosomal subunit protein uS2c (rps2) of Guizotia abyssinica (Niger).